Here is a 291-residue protein sequence, read N- to C-terminus: Bifunctional protein FolD (291 aa).

Residues 167-169 and serine 192 each bind NADP(+); that span reads GRS.

It belongs to the tetrahydrofolate dehydrogenase/cyclohydrolase family. Homodimer.

The enzyme catalyses (6R)-5,10-methylene-5,6,7,8-tetrahydrofolate + NADP(+) = (6R)-5,10-methenyltetrahydrofolate + NADPH. It catalyses the reaction (6R)-5,10-methenyltetrahydrofolate + H2O = (6R)-10-formyltetrahydrofolate + H(+). The protein operates within one-carbon metabolism; tetrahydrofolate interconversion. In terms of biological role, catalyzes the oxidation of 5,10-methylenetetrahydrofolate to 5,10-methenyltetrahydrofolate and then the hydrolysis of 5,10-methenyltetrahydrofolate to 10-formyltetrahydrofolate. This is Bifunctional protein FolD from Leptospira biflexa serovar Patoc (strain Patoc 1 / Ames).